We begin with the raw amino-acid sequence, 207 residues long: Large ribosomal subunit protein uL4 (207 aa).

The tract at residues 45–78 is disordered; sequence RQGTHAVKNRSAVSGGGRKPWRQKGTGRARQGSI.

This sequence belongs to the universal ribosomal protein uL4 family. As to quaternary structure, part of the 50S ribosomal subunit.

Its function is as follows. One of the primary rRNA binding proteins, this protein initially binds near the 5'-end of the 23S rRNA. It is important during the early stages of 50S assembly. It makes multiple contacts with different domains of the 23S rRNA in the assembled 50S subunit and ribosome. In terms of biological role, forms part of the polypeptide exit tunnel. This chain is Large ribosomal subunit protein uL4, found in Lacticaseibacillus paracasei (strain ATCC 334 / BCRC 17002 / CCUG 31169 / CIP 107868 / KCTC 3260 / NRRL B-441) (Lactobacillus paracasei).